Consider the following 166-residue polypeptide: SsrA-binding protein (166 aa).

The disordered stretch occupies residues 143-166 (HDKREDDKRKQANRDMKSALARYR). The segment covering 144–159 (DKREDDKRKQANRDMK) has biased composition (basic and acidic residues).

It belongs to the SmpB family.

The protein resides in the cytoplasm. Required for rescue of stalled ribosomes mediated by trans-translation. Binds to transfer-messenger RNA (tmRNA), required for stable association of tmRNA with ribosomes. tmRNA and SmpB together mimic tRNA shape, replacing the anticodon stem-loop with SmpB. tmRNA is encoded by the ssrA gene; the 2 termini fold to resemble tRNA(Ala) and it encodes a 'tag peptide', a short internal open reading frame. During trans-translation Ala-aminoacylated tmRNA acts like a tRNA, entering the A-site of stalled ribosomes, displacing the stalled mRNA. The ribosome then switches to translate the ORF on the tmRNA; the nascent peptide is terminated with the 'tag peptide' encoded by the tmRNA and targeted for degradation. The ribosome is freed to recommence translation, which seems to be the essential function of trans-translation. In Prochlorococcus marinus (strain MIT 9211), this protein is SsrA-binding protein.